We begin with the raw amino-acid sequence, 423 residues long: Histidine--tRNA ligase (423 aa).

The protein belongs to the class-II aminoacyl-tRNA synthetase family. Homodimer.

It localises to the cytoplasm. It carries out the reaction tRNA(His) + L-histidine + ATP = L-histidyl-tRNA(His) + AMP + diphosphate + H(+). This chain is Histidine--tRNA ligase, found in Phytoplasma mali (strain AT).